Consider the following 273-residue polypeptide: R-spondin-3 (273 aa).

Positions 1–21 (MHLRLISWFFIILNFMEYIGS) are cleaved as a signal peptide. FU repeat units lie at residues 35 to 86 (PNVS…GYYG) and 92 to 135 (INKC…GLEA). Asn-36 carries an N-linked (GlcNAc...) asparagine glycan. 11 cysteine pairs are disulfide-bonded: Cys-41/Cys-48, Cys-45/Cys-54, Cys-57/Cys-76, Cys-80/Cys-95, Cys-98/Cys-105, Cys-102/Cys-111, Cys-114/Cys-125, Cys-129/Cys-142, Cys-148/Cys-190, Cys-159/Cys-166, and Cys-199/Cys-206. The region spanning 147–207 (HCEASEWSPW…KCTVQRKKCP (61 aa)) is the TSP type-1 domain. The tract at residues 201 to 273 (VQRKKCPKGE…QKSVSVSTVH (73 aa)) is disordered. Basic residues predominate over residues 213 to 223 (RKGRERKRKKP). Residues 224 to 252 (NKEESKDAIPDNKGLEPSRETPEQRENKQ) show a composition bias toward basic and acidic residues.

The protein belongs to the R-spondin family. As to quaternary structure, interacts with the extracellular domain of FZD8 and LRP6. It however does not form a ternary complex with FZD8 and LRP6. Interacts with WNT1. Binds heparin. Interacts with LGR4, LGR5 and LGR6.

It is found in the secreted. Its function is as follows. Activator of the canonical Wnt signaling pathway by acting as a ligand for LGR4-6 receptors, which acts as a key regulator of angiogenesis. Upon binding to LGR4-6 (LGR4, LGR5 or LGR6), LGR4-6 associate with phosphorylated LRP6 and frizzled receptors that are activated by extracellular Wnt receptors, triggering the canonical Wnt signaling pathway to increase expression of target genes. Also regulates the canonical Wnt/beta-catenin-dependent pathway and non-canonical Wnt signaling by acting as an inhibitor of ZNRF3, an important regulator of the Wnt signaling pathway. Acts as a ligand for frizzled FZD8 and LRP6. May negatively regulate the TGF-beta pathway. Acts as a key regulator of angiogenesis by controlling vascular stability and pruning: acts by activating the non-canonical Wnt signaling pathway in endothelial cells. Can also amplify Wnt signaling pathway independently of LGR4-6 receptors, possibly by acting as a direct antagonistic ligand to RNF43 and ZNRF3. This is R-spondin-3 (RSPO3) from Bos taurus (Bovine).